A 258-amino-acid polypeptide reads, in one-letter code: Short-chain dehydrogenase reductase 3c (258 aa).

12–36 provides a ligand contact to NAD(+); the sequence is IITGGASGIGADAARLFTDHGAKVV. Substrate is bound at residue Ser144. Tyr156 (proton acceptor) is an active-site residue.

The protein belongs to the short-chain dehydrogenases/reductases (SDR) family.

In Arabidopsis thaliana (Mouse-ear cress), this protein is Short-chain dehydrogenase reductase 3c (SDR3c).